A 456-amino-acid chain; its full sequence is Argininosuccinate lyase (456 aa).

Belongs to the lyase 1 family. Argininosuccinate lyase subfamily.

It localises to the cytoplasm. It catalyses the reaction 2-(N(omega)-L-arginino)succinate = fumarate + L-arginine. The protein operates within amino-acid biosynthesis; L-arginine biosynthesis; L-arginine from L-ornithine and carbamoyl phosphate: step 3/3. This chain is Argininosuccinate lyase, found in Listeria monocytogenes serotype 4b (strain CLIP80459).